The primary structure comprises 419 residues: 1,4-beta-D-glucan cellobiohydrolase CEL6B (419 aa).

The first 47 residues, 1–47 (MGESFLLLQPASPALSPTPSSLLLGPTITMRADVLIAALATGALVAA), serve as a signal peptide directing secretion. Residues tryptophan 111 and serine 113 each contribute to the substrate site. Catalysis depends on proton donor residues aspartate 152 and aspartate 199. Tryptophan 247 is a substrate binding site. An N-linked (GlcNAc...) asparagine glycan is attached at asparagine 284. Asparagine 287 serves as a coordination point for substrate. Asparagine 298 is a glycosylation site (N-linked (GlcNAc...) asparagine). Substrate is bound at residue tryptophan 347. Residue asparagine 364 is glycosylated (N-linked (GlcNAc...) asparagine). Positions 375 and 379 each coordinate substrate.

It belongs to the glycosyl hydrolase 6 (cellulase B) family. In terms of processing, both N- and O-glycosylated.

The protein localises to the secreted. The enzyme catalyses Hydrolysis of (1-&gt;4)-beta-D-glucosidic linkages in cellulose and cellotetraose, releasing cellobiose from the non-reducing ends of the chains.. In terms of biological role, exoglucanase that plays an important function in biomass degradation by catalyzing the hydrolysis of the non-reducing end beta-1,4-glucosidic linkages in cellulose and cellotetraose to release cellobiose. Hydrolyzes crystalline and amorphous cellulose but is inactive on hydroxyethyl cellulose, mannan, galactomannan, xyloglucan, arabinoxylan, arabinan, xylan, and pectin. The sequence is that of 1,4-beta-D-glucan cellobiohydrolase CEL6B from Podospora anserina (strain S / ATCC MYA-4624 / DSM 980 / FGSC 10383) (Pleurage anserina).